We begin with the raw amino-acid sequence, 633 residues long: Peptidoglycan D,D-transpeptidase MrdA (633 aa).

The helical transmembrane segment at 22 to 42 threads the bilayer; it reads LVAFLGILLLTGVLIANLYNL. Serine 330 functions as the Acyl-ester intermediate in the catalytic mechanism.

This sequence belongs to the transpeptidase family. MrdA subfamily.

The protein localises to the cell inner membrane. It carries out the reaction Preferential cleavage: (Ac)2-L-Lys-D-Ala-|-D-Ala. Also transpeptidation of peptidyl-alanyl moieties that are N-acyl substituents of D-alanine.. It participates in cell wall biogenesis; peptidoglycan biosynthesis. Its function is as follows. Catalyzes cross-linking of the peptidoglycan cell wall. The chain is Peptidoglycan D,D-transpeptidase MrdA from Escherichia coli O157:H7.